The sequence spans 566 residues: Phenylalanine--tRNA ligase beta subunit (566 aa).

One can recognise a B5 domain in the interval 287 to 362 (YFQEEVEFDV…IGEGLASFYP (76 aa)). Residues aspartate 340, aspartate 346, glutamate 349, and aspartate 350 each contribute to the Mg(2+) site.

Belongs to the phenylalanyl-tRNA synthetase beta subunit family. Type 2 subfamily. Tetramer of two alpha and two beta subunits. It depends on Mg(2+) as a cofactor.

Its subcellular location is the cytoplasm. It carries out the reaction tRNA(Phe) + L-phenylalanine + ATP = L-phenylalanyl-tRNA(Phe) + AMP + diphosphate + H(+). This Borrelia garinii subsp. bavariensis (strain ATCC BAA-2496 / DSM 23469 / PBi) (Borreliella bavariensis) protein is Phenylalanine--tRNA ligase beta subunit.